A 592-amino-acid polypeptide reads, in one-letter code: Arginine--tRNA ligase (592 aa).

Residues 128–138 (ANPTGPLHVGH) carry the 'HIGH' region motif.

The protein belongs to the class-I aminoacyl-tRNA synthetase family. In terms of assembly, monomer.

Its subcellular location is the cytoplasm. The catalysed reaction is tRNA(Arg) + L-arginine + ATP = L-arginyl-tRNA(Arg) + AMP + diphosphate. The protein is Arginine--tRNA ligase of Hydrogenovibrio crunogenus (strain DSM 25203 / XCL-2) (Thiomicrospira crunogena).